The chain runs to 65 residues: Large ribosomal subunit protein uL29 (65 aa).

The protein belongs to the universal ribosomal protein uL29 family.

This is Large ribosomal subunit protein uL29 from Buchnera aphidicola subsp. Schizaphis graminum (strain Sg).